The chain runs to 967 residues: uncharacterized protein (967 aa).

A signal peptide spans 1-29 (MKKKLKSVLIWFLIFTFNLSLGSFREVFA). BIG2 domains are found at residues 38 to 107 (TAIT…QDGS) and 133 to 190 (LPVG…VNDG).

This is an uncharacterized protein from Clostridium acetobutylicum (strain ATCC 824 / DSM 792 / JCM 1419 / IAM 19013 / LMG 5710 / NBRC 13948 / NRRL B-527 / VKM B-1787 / 2291 / W).